Reading from the N-terminus, the 156-residue chain is Small ribosomal subunit protein uS7c (156 aa).

This sequence belongs to the universal ribosomal protein uS7 family. In terms of assembly, part of the 30S ribosomal subunit.

It localises to the plastid. The protein localises to the chloroplast. Functionally, one of the primary rRNA binding proteins, it binds directly to 16S rRNA where it nucleates assembly of the head domain of the 30S subunit. This Tupiella akineta (Green alga) protein is Small ribosomal subunit protein uS7c (rps7).